A 507-amino-acid chain; its full sequence is Germ cell nuclear acidic protein (507 aa).

Positions 1–51 (MDSGSSSSSSSSGSSSGSCSTSGSGSTSGSSTTSSSSSSSSSSSSSSSSSS) are enriched in low complexity. The interval 1–507 (MDSGSSSSSS…GRGRGAKAGK (507 aa)) is disordered. 4 short sequence motifs (SUMO interaction motif 1 (SIM)) span residues 12–15 (SGSS), 66–69 (CVVI), 86–89 (VCEI), and 108–111 (LIVI). Basic and acidic residues-rich tracts occupy residues 122–141 (KNTKQKSDEPQMSVLEKEGV), 179–354 (SEAK…KGEM), and 431–449 (PQDRADPQDLADPQDRGDS). Basic residues predominate over residues 480–507 (GRGRGRGRGRGRGRGRGRGRGRGAKAGK).

Belongs to the serine-aspartate repeat-containing protein (SDr) family. Interacts (via SIM domains) with SUMO2; this interaction allows the GCNA recruitment to DPCs sites. Interacts with TOP2A; this interaction allows the resolution of topoisomerase II (TOP2A) DNA-protein cross-links. In terms of tissue distribution, germ-cells specific.

It is found in the chromosome. The protein localises to the nucleus. It localises to the PML body. Functionally, may play a role in DNA-protein cross-links (DPCs) clearance through a SUMO-dependent recruitment to sites of DPCs, ensuring the genomic stability by protecting germ cells and early embryos from various sources of damage. Can resolve the topoisomerase II (TOP2A) DPCs. The sequence is that of Germ cell nuclear acidic protein from Mus musculus (Mouse).